The primary structure comprises 262 residues: 7alpha-hydroxysteroid dehydrogenase (262 aa).

Residues S13–I18, R38, N63–A64, and N90 contribute to the NADP(+) site. Residues T145 and Y158 each contribute to the taurochenodeoxycholate site. NADP(+)-binding positions include Y158, K162, and I191–A195. Y158 functions as the Proton acceptor in the catalytic mechanism.

It belongs to the short-chain dehydrogenases/reductases (SDR) family. As to quaternary structure, homotetramer. A dynamic equilibrium between dimers and tetramers seems to exist.

It catalyses the reaction cholate + NADP(+) = 3alpha,12alpha-dihydroxy-7-oxo-5beta-cholanate + NADPH + H(+). The enzyme catalyses chenodeoxycholate + NADP(+) = 7-oxolithocholate + NADPH + H(+). It carries out the reaction 3alpha,7alpha-dihydroxy-12-oxo-5beta-cholanate + NADP(+) = 7,12-dioxo-lithocholate + NADPH + H(+). The catalysed reaction is 7alpha-hydroxy-3,12-dioxo-5beta-cholanate + NADP(+) = dehydrocholate + NADPH + H(+). It catalyses the reaction glycochenodeoxycholate + NADP(+) = 7-oxoglycolithocholate + NADPH + H(+). The enzyme catalyses taurochenodeoxycholate + NADP(+) = 7-oxotaurolithocholate + NADPH + H(+). Its activity is regulated as follows. Activated by metal ions such as Mg(2+), Na(+) and K(+). Its function is as follows. 7alpha-hydroxysteroid dehydrogenase that catalyzes the NADP(+)-dependent oxidation of the 7alpha-hydroxy group of 7alpha-hydroxysteroids, such as cholate, chenodeoxycholate, glycochenodeoxycholate and taurochenodeoxycholate, to the corresponding 7-oxosteroids. Is also able to catalyze the reverse reduction reactions. Together with 7beta-HSDH encoded in the adjacent gene, is likely involved in the epimerization of the hydroxy group at C-7 of primary bile acids through 7-keto bile acid intermediates. In Clostridium sardiniense (Clostridium absonum), this protein is 7alpha-hydroxysteroid dehydrogenase.